The primary structure comprises 423 residues: UPF0229 protein PFLU_5583 (423 aa).

The interval Leu-64–Gly-109 is disordered. The segment covering Gln-92–Gly-107 has biased composition (gly residues).

Belongs to the UPF0229 family.

This Pseudomonas fluorescens (strain SBW25) protein is UPF0229 protein PFLU_5583.